Consider the following 822-residue polypeptide: IQ and AAA domain-containing protein 1-like (822 aa).

An IQ domain is found at 206–235; that stretch reads QDQGAIVIQKVWKGYLQRKRIEQDRRMEME. A compositionally biased stretch (basic and acidic residues) spans 338 to 363; the sequence is RQELEAQAQENKKKEQEKNKDKVKEK. Disordered stretches follow at residues 338–378 and 457–484; these read RQEL…KAKK and REET…KDLT. A compositionally biased stretch (basic residues) spans 464-479; that stretch reads KSPKKKGGKKSGKKKK. 569 to 576 lines the ATP pocket; that stretch reads GPSGMGKK.

This sequence belongs to the AAA ATPase family.

This chain is IQ and AAA domain-containing protein 1-like (Iqca1l), found in Rattus norvegicus (Rat).